Consider the following 176-residue polypeptide: Shikimate kinase (176 aa).

14 to 19 (GAGKST) serves as a coordination point for ATP. Residue Ser18 coordinates Mg(2+). Residues Asp36, Arg60, and Gly83 each contribute to the substrate site. Arg121 provides a ligand contact to ATP. Arg140 serves as a coordination point for substrate.

This sequence belongs to the shikimate kinase family. As to quaternary structure, monomer. Mg(2+) serves as cofactor.

The protein localises to the cytoplasm. It catalyses the reaction shikimate + ATP = 3-phosphoshikimate + ADP + H(+). The protein operates within metabolic intermediate biosynthesis; chorismate biosynthesis; chorismate from D-erythrose 4-phosphate and phosphoenolpyruvate: step 5/7. Its function is as follows. Catalyzes the specific phosphorylation of the 3-hydroxyl group of shikimic acid using ATP as a cosubstrate. In Francisella philomiragia subsp. philomiragia (strain ATCC 25017 / CCUG 19701 / FSC 153 / O#319-036), this protein is Shikimate kinase.